The primary structure comprises 111 residues: Prophage-derived-like uncharacterized protein YozM (111 aa).

An N-terminal signal peptide occupies residues 1–24 (MKKRLIGFLVLVPALIMWGITLIE).

This chain is Prophage-derived-like uncharacterized protein YozM (yozM), found in Bacillus subtilis (strain 168).